A 343-amino-acid polypeptide reads, in one-letter code: Peroxisome assembly protein 12 (343 aa).

Topologically, residues 1–5 (MDSPS) are peroxisomal matrix. Residues 6–33 (LLEVLQVQQVEKLISPSLRFILAYFTHR) form a helical membrane-spanning segment. Residues 34-37 (YPRF) lie on the Cytoplasmic side of the membrane. The helical transmembrane segment at 38-62 (LLRAYNSFDGIYLLVKLLLEKSQLK) threads the bilayer. Topologically, residues 63 to 102 (KWNATSVERRFQLKRVIAVRDSSIIAEEFPQESESATSLN) are peroxisomal matrix. The chain crosses the membrane as a helical span at residues 103 to 140 (GIDVLKKLFLTYCIPYLLEKCESLTTVKENHTAVSILS). Residues 141 to 146 (LQARDK) lie on the Cytoplasmic side of the membrane. The helical transmembrane segment at 147–193 (QKGALSVFYSKIKILLVRLKKILHFVFRLIRKSNTYLQWLYYLLYAL) threads the bilayer. The Peroxisomal matrix segment spans residues 194-238 (GKTPYTNLADHILRQRVIYNVENIHSRKLISTREKSSLLTSIADH). Residues 239–266 (SMEGFLIIIQLIDWWQSNNYESHLKKGE) form a helical membrane-spanning segment. Residues 267 to 343 (VAFTELAPPK…KGESFWRLMI (77 aa)) are Cytoplasmic-facing. Zn(2+)-binding residues include Cys289, Cys292, Cys309, and Cys312. The RING-type; degenerate zinc finger occupies 289-328 (CKICGEKIKNPAVLSTGFVFCYPCIQVWLQRHPFKCPVTN).

The protein belongs to the pex2/pex10/pex12 family. Component of the PEX2-PEX10-PEX12 retrotranslocation channel, composed of PEX2, PEX10 and PEX12.

The protein localises to the peroxisome membrane. The protein operates within protein modification; protein ubiquitination. Functionally, component of a retrotranslocation channel required for peroxisome organization by mediating export of the PEX5 receptor from peroxisomes to the cytosol, thereby promoting PEX5 recycling. The retrotranslocation channel is composed of PEX2, PEX10 and PEX12; each subunit contributing transmembrane segments that coassemble into an open channel that specifically allows the passage of PEX5 through the peroxisomal membrane. PEX12 also regulates PEX5 recycling by activating the E3 ubiquitin-protein ligase activity of PEX10. When PEX5 recycling is compromised, PEX12 stimulates PEX10-mediated polyubiquitination of PEX5, leading to its subsequent degradation. The chain is Peroxisome assembly protein 12 (pex12) from Schizosaccharomyces pombe (strain 972 / ATCC 24843) (Fission yeast).